The chain runs to 586 residues: Arginine--tRNA ligase (586 aa).

The 'HIGH' region motif lies at A133–S143.

The protein belongs to the class-I aminoacyl-tRNA synthetase family. As to quaternary structure, monomer.

The protein localises to the cytoplasm. The catalysed reaction is tRNA(Arg) + L-arginine + ATP = L-arginyl-tRNA(Arg) + AMP + diphosphate. The polypeptide is Arginine--tRNA ligase (Leptospira borgpetersenii serovar Hardjo-bovis (strain JB197)).